The following is a 426-amino-acid chain: MLDAKYIKDNLQQVAEKLATRGYQFDIAEFEAQEQKRRHLQERTQDLQSQRNTISKEIGQKKAKGEDTSDIFAKVNQINEELKIIEKELKDLQDTINQTLLSMPNLPADDVPVGKDENDNVEIRRWGTPREFHPEAPAKDHADIGEILKMIDFKAAAKVTGSRFMVLKNKIAKLHRALSQFMLDLHTEKHGYEELYVPYLVNNDSLYGTGQLPKFAADLFKLEGDFEYSLIPTAEVPITNLVRDEILDTETLPRYYTAHTPCFRSEAGSYGRDTKGMIRQHQFEKVELVHITAADKGEESLELLTSHAEKVLQKLNLPYRVMKLCTGDMSFSAKKTYDLEVWLPSQNTYREISSCSWCGDFQARRMKARHKNPSMKKPELVHTLNGSGLAVGRTLLAIIENYQQEDGSIMVPDALIKYMGGISVIK.

The segment at 36-66 (KRRHLQERTQDLQSQRNTISKEIGQKKAKGE) is disordered. Over residues 46 to 55 (DLQSQRNTIS) the composition is skewed to polar residues. 233–235 (TAE) is an L-serine binding site. 264–266 (RSE) serves as a coordination point for ATP. Position 287 (glutamate 287) interacts with L-serine. 351–354 (EISS) lines the ATP pocket. Serine 387 is a binding site for L-serine.

It belongs to the class-II aminoacyl-tRNA synthetase family. Type-1 seryl-tRNA synthetase subfamily. Homodimer. The tRNA molecule binds across the dimer.

Its subcellular location is the cytoplasm. The catalysed reaction is tRNA(Ser) + L-serine + ATP = L-seryl-tRNA(Ser) + AMP + diphosphate + H(+). The enzyme catalyses tRNA(Sec) + L-serine + ATP = L-seryl-tRNA(Sec) + AMP + diphosphate + H(+). The protein operates within aminoacyl-tRNA biosynthesis; selenocysteinyl-tRNA(Sec) biosynthesis; L-seryl-tRNA(Sec) from L-serine and tRNA(Sec): step 1/1. In terms of biological role, catalyzes the attachment of serine to tRNA(Ser). Is also able to aminoacylate tRNA(Sec) with serine, to form the misacylated tRNA L-seryl-tRNA(Sec), which will be further converted into selenocysteinyl-tRNA(Sec). This Francisella tularensis subsp. novicida (strain U112) protein is Serine--tRNA ligase.